Reading from the N-terminus, the 215-residue chain is Ribose-5-phosphate isomerase A (215 aa).

Substrate contacts are provided by residues Thr26 to Thr29, Asp79 to Asp82, and Lys92 to Gly95. Residue Glu101 is the Proton acceptor of the active site. Residue Lys119 participates in substrate binding.

The protein belongs to the ribose 5-phosphate isomerase family. In terms of assembly, homodimer.

The enzyme catalyses aldehydo-D-ribose 5-phosphate = D-ribulose 5-phosphate. It functions in the pathway carbohydrate degradation; pentose phosphate pathway; D-ribose 5-phosphate from D-ribulose 5-phosphate (non-oxidative stage): step 1/1. Functionally, catalyzes the reversible conversion of ribose-5-phosphate to ribulose 5-phosphate. The protein is Ribose-5-phosphate isomerase A of Xylella fastidiosa (strain M12).